The chain runs to 542 residues: Sialate O-acetylesterase (542 aa).

A signal peptide spans 1-23 (MVSPRPVGLMLLLIIARVSRGAG). 8 N-linked (GlcNAc...) asparagine glycosylation sites follow: N107, N138, N188, N294, N357, N428, N449, and N463.

As to quaternary structure, disulfide-linked heterodimer of a small subunit and a large subunit. The two subunits are derived from a single precursor by proteolytic cleavage. In terms of processing, glycosylated. In terms of tissue distribution, widely expressed.

Its subcellular location is the lysosome. It catalyses the reaction N-acetyl-9-O-acetylneuraminate + H2O = N-acetylneuraminate + acetate + H(+). It carries out the reaction an Ac-O-9-sialoglycoconjugate + H2O = a sialoglycoconjugate + acetate + H(+). Inhibited by diisopropyl fluorophosphate and diethyl-P-nitrophenyl phosphate. Catalyzes the removal of O-acetyl ester groups from position 9 of the free diacetylated sialate N-acetyl-9-O-acetylneuraminate (Neu5,9Ac2) in the cytosol and of the diacetylated sialate residues of sialylglycoconjugates in the lysosomes. Together with the sialate-O-acetyltransferase they regulate the balance of acetylated sialoglycoconjugates, key players in various processes such as cell-cell interactions, host-pathogen recognition, and tumor antigenicity. The protein is Sialate O-acetylesterase (Siae) of Rattus norvegicus (Rat).